The primary structure comprises 185 residues: Transcription antitermination protein NusB (185 aa).

The protein belongs to the NusB family.

In terms of biological role, involved in transcription antitermination. Required for transcription of ribosomal RNA (rRNA) genes. Binds specifically to the boxA antiterminator sequence of the ribosomal RNA (rrn) operons. This chain is Transcription antitermination protein NusB, found in Rhodospirillum rubrum (strain ATCC 11170 / ATH 1.1.1 / DSM 467 / LMG 4362 / NCIMB 8255 / S1).